The sequence spans 936 residues: DNA topoisomerase 1 (936 aa).

The Toprim domain maps to 15–139 (RRLVIVESPT…VKRMVFHEIT (125 aa)). The Mg(2+) site is built by glutamate 21 and aspartate 108. One can recognise a Topo IA-type catalytic domain in the interval 154–611 (DIALVDAQET…FYFGGEHGVE (458 aa)). The segment at 188–193 (SAGRVQ) is interaction with DNA. The active-site O-(5'-phospho-DNA)-tyrosine intermediate is the tyrosine 339. 4 disordered regions span residues 661–688 (LERM…LTPD), 732–767 (VLPE…SLFR), 841–884 (KRRG…ETNA), and 903–936 (LLAD…AKKA). Over residues 910 to 936 (RGPVKKKAPAKKAAKKAPAKKAAAKKA) the composition is skewed to basic residues.

The protein belongs to the type IA topoisomerase family. As to quaternary structure, monomer. The cofactor is Mg(2+).

The enzyme catalyses ATP-independent breakage of single-stranded DNA, followed by passage and rejoining.. Functionally, releases the supercoiling and torsional tension of DNA, which is introduced during the DNA replication and transcription, by transiently cleaving and rejoining one strand of the DNA duplex. Introduces a single-strand break via transesterification at a target site in duplex DNA. The scissile phosphodiester is attacked by the catalytic tyrosine of the enzyme, resulting in the formation of a DNA-(5'-phosphotyrosyl)-enzyme intermediate and the expulsion of a 3'-OH DNA strand. The free DNA strand then undergoes passage around the unbroken strand, thus removing DNA supercoils. Finally, in the religation step, the DNA 3'-OH attacks the covalent intermediate to expel the active-site tyrosine and restore the DNA phosphodiester backbone. In terms of biological role, relaxes negatively (but not positively) supercoiled DNA, concatanates and knots circular ssDNA at 52 but not 37 degrees Celsius. Preferentially nicks supercoiled DNA at C(G/T)CTT, cutting between the TT residues, binds ss and dsDNA with the recognition site. This Mycolicibacterium smegmatis (strain ATCC 700084 / mc(2)155) (Mycobacterium smegmatis) protein is DNA topoisomerase 1.